Reading from the N-terminus, the 408-residue chain is LysM domain-containing protein ARB_01488 (408 aa).

Residues 1–17 form the signal peptide; sequence MVKYALLPLVAVSLVQA. One can recognise a LysM 1 domain in the interval 42 to 91; it reads SWINVVDASGKLTCDAFLDTINVAKRQFIFWNPQLNSDCSNIQSKASYCA. The disordered stretch occupies residues 98–178; sequence SKQTRGQMDP…HGPKEAPPPD (81 aa). Residues 106–116 show a composition bias toward pro residues; the sequence is DPPPKTKPLPP. 2 consecutive LysM domains span residues 270–320 and 360–406; these read QYHT…RVCV and SFEL…YACV.

It localises to the secreted. Its function is as follows. Might have a role in sequestration of chitin oligosaccharides (breakdown products of fungal cell walls that are released during invasion and act as triggers of host immunity) to dampen host defense. This Arthroderma benhamiae (strain ATCC MYA-4681 / CBS 112371) (Trichophyton mentagrophytes) protein is LysM domain-containing protein ARB_01488.